Reading from the N-terminus, the 245-residue chain is Fibroblast growth factor-binding protein 3 (245 aa).

A signal peptide spans 1–28; that stretch reads MSPPRPRASLSPLTLLLLLGGCLLSAAG. A disordered region spans residues 33 to 52; the sequence is AAGREVTRASRPTVGSSGRF. Cystine bridges form between Cys-60-Cys-81 and Cys-91-Cys-125. A disordered region spans residues 136–216; sequence CARKTAGSDL…PAAAGFQPNG (81 aa). Residues 170-180 are compositionally biased toward low complexity; sequence RSRQSVRSPSS. Residues Cys-228 and Cys-236 are joined by a disulfide bond.

It belongs to the fibroblast growth factor-binding protein family. In terms of assembly, interacts with FGF2. As to expression, in the adult, highly expressed in brain with lower levels in ovary. In the embryo, highest levels are found in the brain and spinal cord at 14 dpc and expression is almost completely restricted to the brain by 18 dpc. In the adult and postnatal brain, highly expressed in the orbitofrontal cortex where it is concentrated primarily in differentiated neurons.

The protein resides in the secreted. Functionally, heparin-binding protein which binds to FGF2, prevents binding of FGF2 to heparin and probably inhibits immobilization of FGF2 on extracellular matrix glycosaminoglycans, allowing its release and subsequent activation of FGFR signaling which leads to increased vascular permeability. This chain is Fibroblast growth factor-binding protein 3 (Fgfbp3), found in Mus musculus (Mouse).